The following is a 566-amino-acid chain: Putative ABC transporter ATP-binding protein BA_2641/GBAA_2641/BAS2461 (566 aa).

ABC transporter domains follow at residues 5–246 and 300–533; these read ISFE…GLRE and LKVE…ANLK. ATP-binding positions include 39–46 and 333–340; these read GRSGSGKS and GHNGAGKS.

The protein belongs to the ABC transporter superfamily.

The protein localises to the cell membrane. Probably part of an ABC transporter complex. Responsible for energy coupling to the transport system. In Bacillus anthracis, this protein is Putative ABC transporter ATP-binding protein BA_2641/GBAA_2641/BAS2461.